A 61-amino-acid chain; its full sequence is Large ribosomal subunit protein eL37 (61 aa).

Zn(2+)-binding residues include C18, C21, C33, and C36. The segment at 18 to 36 adopts a C4-type zinc-finger fold; the sequence is CRRCGRNAYNPTKKYCASC.

It belongs to the eukaryotic ribosomal protein eL37 family. It depends on Zn(2+) as a cofactor.

In terms of biological role, binds to the 23S rRNA. The polypeptide is Large ribosomal subunit protein eL37 (Methanosphaera stadtmanae (strain ATCC 43021 / DSM 3091 / JCM 11832 / MCB-3)).